The chain runs to 218 residues: Large ribosomal subunit protein eL13 (218 aa).

A disordered region spans residues 196-218 (AKRAKEAAESEDAAKGDPKKAKK). The segment covering 199–218 (AKEAAESEDAAKGDPKKAKK) has biased composition (basic and acidic residues).

It belongs to the eukaryotic ribosomal protein eL13 family. In terms of assembly, component of the 60S large ribosomal subunit (LSU).

The protein localises to the cytoplasm. In terms of biological role, component of the ribosome, a large ribonucleoprotein complex responsible for the synthesis of proteins in the cell. The small ribosomal subunit (SSU) binds messenger RNAs (mRNAs) and translates the encoded message by selecting cognate aminoacyl-transfer RNA (tRNA) molecules. The large subunit (LSU) contains the ribosomal catalytic site termed the peptidyl transferase center (PTC), which catalyzes the formation of peptide bonds, thereby polymerizing the amino acids delivered by tRNAs into a polypeptide chain. The nascent polypeptides leave the ribosome through a tunnel in the LSU and interact with protein factors that function in enzymatic processing, targeting, and the membrane insertion of nascent chains at the exit of the ribosomal tunnel. As part of the LSU, it is probably required for its formation and the maturation of rRNAs. The chain is Large ribosomal subunit protein eL13 (RpL13) from Drosophila melanogaster (Fruit fly).